Reading from the N-terminus, the 173-residue chain is Bursicon (173 aa).

The N-terminal stretch at 1 to 32 (MLRHLLRHENNKVFVLILLYCVLVSILKLCTA) is a signal peptide. Intrachain disulfides connect Cys52/Cys101, Cys66/Cys115, Cys76/Cys136, Cys80/Cys138, and Cys98/Cys141. The 91-residue stretch at 52–142 (CQVTPVIHVL…PLECMCRPCT (91 aa)) folds into the CTCK domain.

In terms of assembly, heterodimer of Burs and Pburs. In terms of tissue distribution, expressed in one to two pairs of neurons in each of the thoracic and abdominal neuromeres of the larval CNS. Coexpressed with CCAP in most CCAP-specific neurons. Coexpressed with Pburs in four bilateral neurons in thoracic and abdominal neuromeres of the ventral nervous system.

It localises to the secreted. Final heterodimeric neurohormone released at the end of the molting cycle, involved in the sclerotization (tanning) of the insect cuticle, melanization and wing spreading. Heterodimer specifically activates the G protein-coupled receptor rk. The protein is Bursicon of Drosophila melanogaster (Fruit fly).